Here is a 130-residue protein sequence, read N- to C-terminus: Fluoride-specific ion channel FluC (130 aa).

4 helical membrane passes run 10–30 (FAVA…SLWF), 41–61 (GTLI…TVAM), 72–89 (LLFG…STYE), and 105–125 (LVYW…GILL). The Na(+) site is built by Gly80 and Thr83.

It belongs to the fluoride channel Fluc/FEX (TC 1.A.43) family.

It localises to the cell inner membrane. It catalyses the reaction fluoride(in) = fluoride(out). With respect to regulation, na(+) is not transported, but it plays an essential structural role and its presence is essential for fluoride channel function. Functionally, fluoride-specific ion channel. Important for reducing fluoride concentration in the cell, thus reducing its toxicity. This Synechococcus sp. (strain JA-2-3B'a(2-13)) (Cyanobacteria bacterium Yellowstone B-Prime) protein is Fluoride-specific ion channel FluC.